A 207-amino-acid chain; its full sequence is High frequency lysogenization protein HflD homolog (207 aa).

The protein belongs to the HflD family.

Its subcellular location is the cytoplasm. It localises to the cell inner membrane. The polypeptide is High frequency lysogenization protein HflD homolog (Azotobacter vinelandii (strain DJ / ATCC BAA-1303)).